We begin with the raw amino-acid sequence, 477 residues long: Ectonucleotide pyrophosphatase/phosphodiesterase family member 5 (477 aa).

The N-terminal stretch at Met1 to Gln24 is a signal peptide. Asp36 and Thr72 together coordinate Zn(2+). Thr72 (nucleophile) is an active-site residue. Residues Asn101 and Asn158 are each glycosylated (N-linked (GlcNAc...) asparagine). Residues Asp191, His195, Asp238, and His239 each coordinate Zn(2+). Residues Asn292 and Asn329 are each glycosylated (N-linked (GlcNAc...) asparagine). Residue His339 coordinates Zn(2+). N-linked (GlcNAc...) asparagine glycans are attached at residues Asn362, Asn369, Asn382, and Asn389. Residues Pro432–Ile452 traverse the membrane as a helical segment.

Belongs to the nucleotide pyrophosphatase/phosphodiesterase family. The cofactor is Zn(2+). N-glycosylated.

The protein localises to the secreted. It localises to the membrane. Can hydrolyze NAD but cannot hydrolyze nucleotide di- and triphosphates. Lacks lysopholipase D activity. May play a role in neuronal cell communication. The sequence is that of Ectonucleotide pyrophosphatase/phosphodiesterase family member 5 from Homo sapiens (Human).